The primary structure comprises 163 residues: Protein LOL5 (163 aa).

Composition is skewed to polar residues over residues M1–S25 and L33–H44. Positions M1–D51 are disordered. Putative zinc finger regions lie at residues Q70–V100 and K108–I138.

The protein resides in the nucleus. Functionally, involved in plant growth and disease resistance. This chain is Protein LOL5 (LOL5), found in Oryza sativa subsp. japonica (Rice).